Consider the following 329-residue polypeptide: N-acetylmuramoyl-L-alanine amidase sle1 (329 aa).

The signal sequence occupies residues 1–26; it reads MNKKILATAVLGTGALSTLFAHQAEA. 3 consecutive LysM domains span residues 28–71, 88–131, and 152–195; these read TTHT…VLKV, STYT…QLKV, and STYT…KLRV. In terms of domain architecture, Peptidase C51 spans 205 to 329; the sequence is STRSAQSTYY…YQVRNYKFIH (125 aa).

It localises to the secreted. The protein localises to the cell surface. The catalysed reaction is Hydrolyzes the link between N-acetylmuramoyl residues and L-amino acid residues in certain cell-wall glycopeptides.. Functionally, peptidoglycan hydrolase involved in the splitting of the septum during cell division. In Staphylococcus haemolyticus (strain JCSC1435), this protein is N-acetylmuramoyl-L-alanine amidase sle1 (sle1).